The sequence spans 474 residues: Light-independent protochlorophyllide reductase subunit N (474 aa).

[4Fe-4S] cluster-binding residues include Cys22, Cys47, and Cys107.

It belongs to the BchN/ChlN family. In terms of assembly, protochlorophyllide reductase is composed of three subunits; ChlL, ChlN and ChlB. Forms a heterotetramer of two ChlB and two ChlN subunits. It depends on [4Fe-4S] cluster as a cofactor.

It is found in the plastid. Its subcellular location is the chloroplast. The enzyme catalyses chlorophyllide a + oxidized 2[4Fe-4S]-[ferredoxin] + 2 ADP + 2 phosphate = protochlorophyllide a + reduced 2[4Fe-4S]-[ferredoxin] + 2 ATP + 2 H2O. It functions in the pathway porphyrin-containing compound metabolism; chlorophyll biosynthesis (light-independent). Its function is as follows. Component of the dark-operative protochlorophyllide reductase (DPOR) that uses Mg-ATP and reduced ferredoxin to reduce ring D of protochlorophyllide (Pchlide) to form chlorophyllide a (Chlide). This reaction is light-independent. The NB-protein (ChlN-ChlB) is the catalytic component of the complex. The protein is Light-independent protochlorophyllide reductase subunit N of Physcomitrium patens (Spreading-leaved earth moss).